Reading from the N-terminus, the 449-residue chain is Allantoinase (449 aa).

The Zn(2+) site is built by His59, His61, Lys146, His182, His238, and Asp311. The residue at position 146 (Lys146) is an N6-carboxylysine.

This sequence belongs to the metallo-dependent hydrolases superfamily. Allantoinase family. Homotetramer. Requires Zn(2+) as cofactor. Post-translationally, carboxylation allows a single lysine to coordinate two zinc ions.

It carries out the reaction (S)-allantoin + H2O = allantoate + H(+). It functions in the pathway nitrogen metabolism; (S)-allantoin degradation; allantoate from (S)-allantoin: step 1/1. In terms of biological role, catalyzes the conversion of allantoin (5-ureidohydantoin) to allantoic acid by hydrolytic cleavage of the five-member hydantoin ring. This chain is Allantoinase, found in Deinococcus geothermalis (strain DSM 11300 / CIP 105573 / AG-3a).